The chain runs to 225 residues: 2-C-methyl-D-erythritol 4-phosphate cytidylyltransferase (225 aa).

This sequence belongs to the IspD/TarI cytidylyltransferase family. IspD subfamily.

It catalyses the reaction 2-C-methyl-D-erythritol 4-phosphate + CTP + H(+) = 4-CDP-2-C-methyl-D-erythritol + diphosphate. It functions in the pathway isoprenoid biosynthesis; isopentenyl diphosphate biosynthesis via DXP pathway; isopentenyl diphosphate from 1-deoxy-D-xylulose 5-phosphate: step 2/6. In terms of biological role, catalyzes the formation of 4-diphosphocytidyl-2-C-methyl-D-erythritol from CTP and 2-C-methyl-D-erythritol 4-phosphate (MEP). In Clostridium perfringens (strain ATCC 13124 / DSM 756 / JCM 1290 / NCIMB 6125 / NCTC 8237 / Type A), this protein is 2-C-methyl-D-erythritol 4-phosphate cytidylyltransferase.